The chain runs to 343 residues: Protein RecA (343 aa).

64–71 is an ATP binding site; the sequence is GPESSGKT.

This sequence belongs to the RecA family.

The protein resides in the cytoplasm. In terms of biological role, can catalyze the hydrolysis of ATP in the presence of single-stranded DNA, the ATP-dependent uptake of single-stranded DNA by duplex DNA, and the ATP-dependent hybridization of homologous single-stranded DNAs. It interacts with LexA causing its activation and leading to its autocatalytic cleavage. The chain is Protein RecA from Acidiphilium cryptum (strain JF-5).